The sequence spans 83 residues: High-potential iron-sulfur protein (83 aa).

[4Fe-4S] cluster is bound by residues Cys-43, Cys-46, Cys-61, and Cys-75.

The protein belongs to the high-potential iron-sulfur protein (HiPIP) family. As to quaternary structure, homodimer.

Specific class of high-redox-potential 4Fe-4S ferredoxins. Functions in anaerobic electron transport in most purple and in some other photosynthetic bacteria and in at least one genus (Paracoccus) of halophilic, denitrifying bacteria. In Thermochromatium tepidum (Chromatium tepidum), this protein is High-potential iron-sulfur protein (hip).